The sequence spans 261 residues: Zaragozic acid A biosynthesis cluster protein 8 (261 aa).

A compositionally biased stretch (polar residues) spans 242–254 (GTRSHTPAATQRR). A disordered region spans residues 242–261 (GTRSHTPAATQRRGQGRGCG).

It participates in secondary metabolite biosynthesis. Its function is as follows. Part of the gene cluster that mediates the biosynthesis of squalestatin S1 (SQS1, also known as zaragozic acid A), a heavily oxidized fungal polyketide that offers potent cholesterol lowering activity by targeting squalene synthase (SS). SQS1 is composed of a 2,8-dioxobicyclic[3.2.1]octane-3,4,5-tricarboxyclic acid core that is connected to two lipophilic polyketide arms. These initial steps feature the priming of an unusual benzoic acid starter unit onto the highly reducing polyketide synthase clz14, followed by oxaloacetate extension and product release to generate a tricarboxylic acid containing product. The phenylalanine ammonia lyase (PAL) clz10 and the acyl-CoA ligase clz12 are involved in transforming phenylalanine into benzoyl-CoA. The citrate synthase-like protein clz17 is involved in connecting the C-alpha-carbons of the hexaketide chain and oxaloacetate to afford the tricarboxylic acid unit. The potential hydrolytic enzymes, clz11 and clz13, are in close proximity to pks2 and may participate in product release. On the other side, the tetraketide arm is synthesized by a the squalestatin tetraketide synthase clz2 and enzymatically esterified to the core in the last biosynthetic step, by the acetyltransferase clz6. The biosynthesis of the tetraketide must involve 3 rounds of chain extension. After the first and second rounds methyl-transfer occurs, and in all rounds of extension the ketoreductase and dehydratase are active. The enoyl reductase and C-MeT of clz2 are not active in the final round of extension. The acetyltransferase clz6 appears to have a broad substrate selectivity for its acyl CoA substrate, allowing the in vitro synthesis of novel squalestatins. The biosynthesis of SQS1 requires several oxidative steps likely performed by oxidoreductases clz3, clz15 and clz16. Finally, in support of the identification of the cluster as being responsible for SQS1 production, the cluster contains a gene encoding a putative squalene synthase (SS) clz20, suggesting a likely mechanism for self-resistance. The polypeptide is Zaragozic acid A biosynthesis cluster protein 8 (Cochliobolus lunatus (Filamentous fungus)).